The following is an 86-amino-acid chain: Conotoxin Lt15a (86 aa).

The N-terminal stretch at 1 to 23 (MEKLTILILVATVLLAIQVLVQS) is a signal peptide. A propeptide spanning residues 24 to 49 (DGENPVKGRVKHYAAKRFSALFRGPR) is cleaved from the precursor.

It belongs to the conotoxin O2 superfamily. Post-translationally, contains 4 disulfide bonds. In terms of tissue distribution, expressed by the venom duct.

Its subcellular location is the secreted. The sequence is that of Conotoxin Lt15a from Conus litteratus (Lettered cone).